The following is a 413-amino-acid chain: CinA-like protein (413 aa).

This sequence belongs to the CinA family.

The protein is CinA-like protein of Crocosphaera subtropica (strain ATCC 51142 / BH68) (Cyanothece sp. (strain ATCC 51142)).